We begin with the raw amino-acid sequence, 236 residues long: V-set and transmembrane domain-containing protein 2A (236 aa).

A signal peptide spans methionine 1–serine 24. The Ig-like V-type domain occupies alanine 27 to glutamine 143. Asparagine 35 carries an N-linked (GlcNAc...) asparagine glycan. Cysteine 48 and cysteine 127 are oxidised to a cystine. A glycan (N-linked (GlcNAc...) asparagine) is linked at asparagine 175. The segment covering isoleucine 184–glutamine 199 has biased composition (polar residues). Residues isoleucine 184–lysine 206 form a disordered region.

As to quaternary structure, homodimer. Post-translationally, N-glycosylated. N-linked glycosylation is critical for secretion but not for preadipocyte cell differentiation activity.

Its subcellular location is the secreted. Plays a role in the regulation of the early stage of white and brown preadipocyte cell differentiation. Promotes adipogenic commitment of preadipocytes by increasing gene expression of the transcription factor PPARG in a BMP4-dependent signaling pathway. The sequence is that of V-set and transmembrane domain-containing protein 2A from Homo sapiens (Human).